The primary structure comprises 1481 residues: Chromosome partition protein MukB (1481 aa).

Gly34 to Ser41 contacts ATP. Coiled coils occupy residues Ser338–Gln480, Gln509–Trp604, Arg780–Ser805, Glu835–Gly1116, and Glu1210–Val1265. Residues Pro666 to Arg783 form a flexible hinge region.

Belongs to the SMC family. MukB subfamily. As to quaternary structure, homodimerization via its hinge domain. Binds to DNA via its C-terminal region. Interacts, and probably forms a ternary complex, with MukE and MukF via its C-terminal region. The complex formation is stimulated by calcium or magnesium. Interacts with tubulin-related protein FtsZ.

The protein localises to the cytoplasm. It localises to the nucleoid. Its function is as follows. Plays a central role in chromosome condensation, segregation and cell cycle progression. Functions as a homodimer, which is essential for chromosome partition. Involved in negative DNA supercoiling in vivo, and by this means organize and compact chromosomes. May achieve or facilitate chromosome segregation by condensation DNA from both sides of a centrally located replisome during cell division. In Yersinia enterocolitica serotype O:8 / biotype 1B (strain NCTC 13174 / 8081), this protein is Chromosome partition protein MukB.